Here is a 311-residue protein sequence, read N- to C-terminus: Pyrimidine-specific ribonucleoside hydrolase RihA (311 aa).

His-240 is an active-site residue.

This sequence belongs to the IUNH family. RihA subfamily.

Its function is as follows. Hydrolyzes with equal efficiency cytidine or uridine to ribose and cytosine or uracil, respectively. The chain is Pyrimidine-specific ribonucleoside hydrolase RihA from Escherichia coli O139:H28 (strain E24377A / ETEC).